A 96-amino-acid chain; its full sequence is MSAFNIFALVVVVCALMINECCTSQEPTTPLKAASQCSNVKCRRRFDHLGNSVTEGCPSGCLCVYQATGYNQEANGTCYELMKTSTTTTTEGTPAQ.

An N-terminal signal peptide occupies residues 1–24 (MSAFNIFALVVVVCALMINECCTS). Disulfide bonds link Cys37–Cys61, Cys42–Cys63, and Cys57–Cys78.

The protein belongs to the RaCI family. As to expression, expressed in salivary glands.

It localises to the secreted. Its function is as follows. Complement inhibitor. Prevents complement-mediated C5 activation by binding to C5. Binds C5 at a different binding site than the other tick complement inhibitors OmCI and CirpT1, and the drug eculizumab. Inhibits complement in human and guinea pig but not in other species tested (rabbit, rat, mouse, and pig). The polypeptide is Complement inhibitor RaCI4 (Hyalomma rufipes (Tick)).